Reading from the N-terminus, the 199-residue chain is Probable chemoreceptor glutamine deamidase CheD (199 aa).

It belongs to the CheD family.

The enzyme catalyses L-glutaminyl-[protein] + H2O = L-glutamyl-[protein] + NH4(+). Probably deamidates glutamine residues to glutamate on methyl-accepting chemotaxis receptors (MCPs), playing an important role in chemotaxis. The chain is Probable chemoreceptor glutamine deamidase CheD from Cereibacter sphaeroides (Rhodobacter sphaeroides).